The chain runs to 393 residues: N-acyl-phosphatidylethanolamine-hydrolyzing phospholipase D (393 aa).

The residue at position 1 (M1) is an N-acetylmethionine. Positions 1-16 (MDENESNQSLMTSSQY) are enriched in polar residues. Positions 1 to 40 (MDENESNQSLMTSSQYPKEAVRKRQNSARNSGASDSSRFS) are disordered. The Zn(2+) site is built by H185 and H187. Y188 contacts an N-acyl-1,2-diacyl-sn-glycero-3-phosphoethanolamine. The Zn(2+) site is built by D189, H190, and H253. Deoxycholate is bound by residues K256 and M260. D284 serves as a coordination point for Zn(2+). H321 serves as a coordination point for an N-acyl-1,2-diacyl-sn-glycero-3-phosphoethanolamine. H343 lines the Zn(2+) pocket. Position 348 (A348) interacts with deoxycholate.

Belongs to the NAPE-PLD family. As to quaternary structure, homodimer. Bile acids promote the assembly of inactive monomers into an active dimer and enable catalysis. The cofactor is Zn(2+). As to expression, widely expressed. Highest expression in brain, kidney and testis (at protein level). Expressed in adipose tissue (at protein level).

It localises to the golgi apparatus membrane. The protein localises to the early endosome membrane. It is found in the nucleus envelope. The protein resides in the nucleus. Its subcellular location is the nucleoplasm. It carries out the reaction an N-acyl-1,2-diacyl-sn-glycero-3-phosphoethanolamine + H2O = an N-acylethanolamine + a 1,2-diacyl-sn-glycero-3-phosphate + H(+). The enzyme catalyses N-butanoyl-1-hexadecanoyl-2-(9Z,12Z-octadecadienoyl)-sn-glycero-3-phosphoethanolamine + H2O = N-butanoyl ethanolamine + 1-hexadecanoyl-2-(9Z,12Z-octadecadienoyl)-sn-glycero-3-phosphate + H(+). The catalysed reaction is N-hexanoyl-1-hexadecanoyl-2-(9Z,12Z-octadecadienoyl)-sn-glycero-3-phosphoethanolamine + H2O = N-hexanoyl ethanolamine + 1-hexadecanoyl-2-(9Z,12Z-octadecadienoyl)-sn-glycero-3-phosphate + H(+). It catalyses the reaction N-octanoyl-1-hexadecanoyl-2-(9Z,12Z-octadecadienoyl)-sn-glycero-3-phosphoethanolamine + H2O = N-octanoyl ethanolamine + 1-hexadecanoyl-2-(9Z,12Z-octadecadienoyl)-sn-glycero-3-phosphate + H(+). It carries out the reaction N-decanoyl-1-hexadecanoyl-2-(9Z,12Z-octadecadienoyl)-sn-glycero-3-phosphoethanolamine + H2O = N-decanoyl ethanolamine + 1-hexadecanoyl-2-(9Z,12Z-octadecadienoyl)-sn-glycero-3-phosphate + H(+). The enzyme catalyses N-dodecanoyl-1,2-di-(9Z-octadecenoyl)-sn-glycero-3-phosphoethanolamine + H2O = N-dodecanoylethanolamine + 1,2-di-(9Z-octadecenoyl)-sn-glycero-3-phosphate + H(+). The catalysed reaction is N-tetradecanoyl-1,2-di-(9Z-octadecenoyl)-sn-glycero-3-phosphoethanolamine + H2O = N-tetradecanoylethanolamine + 1,2-di-(9Z-octadecenoyl)-sn-glycero-3-phosphate + H(+). It catalyses the reaction N-hexadecanoyl-1,2-di-(9Z-octadecenoyl)-sn-glycero-3-phosphoethanolamine + H2O = N-hexadecanoylethanolamine + 1,2-di-(9Z-octadecenoyl)-sn-glycero-3-phosphate + H(+). It carries out the reaction N,1-dihexadecanoyl-2-(9Z,12Z-octadecadienoyl)-sn-glycero-3-phosphoethanolamine + H2O = 1-hexadecanoyl-2-(9Z,12Z-octadecadienoyl)-sn-glycero-3-phosphate + N-hexadecanoylethanolamine + H(+). The enzyme catalyses N-octadecanoyl-1,2-di-(9Z-octadecenoyl)-sn-glycero-3-phosphoethanolamine + H2O = N-octadecanoyl ethanolamine + 1,2-di-(9Z-octadecenoyl)-sn-glycero-3-phosphate + H(+). The catalysed reaction is N,1,2-tri-(9Z-octadecenoyl)-sn-glycero-3-phosphoethanolamine + H2O = N-(9Z-octadecenoyl) ethanolamine + 1,2-di-(9Z-octadecenoyl)-sn-glycero-3-phosphate + H(+). It catalyses the reaction N-(5Z,8Z,11Z,14Z-eicosatetraenoyl)-1,2-diacyl-sn-glycero-3-phosphoethanolamine + H2O = N-(5Z,8Z,11Z,14Z-eicosatetraenoyl)-ethanolamine + a 1,2-diacyl-sn-glycero-3-phosphate + H(+). It carries out the reaction N-(5Z,8Z,11Z,14Z-eicosatetraenoyl)-1,2-di-(9Z-octadecenoyl)-sn-glycero-3-phosphoethanolamine + H2O = N-(5Z,8Z,11Z,14Z-eicosatetraenoyl)-ethanolamine + 1,2-di-(9Z-octadecenoyl)-sn-glycero-3-phosphate + H(+). The enzyme catalyses 1-O-(1Z-octadecenoyl)-2-(9Z-octadecenoyl)-sn-glycero-3-phospho-N-hexadecanoyl-ethanolamine + H2O = 1-O-(1Z-octadecenoyl)-2-(9Z-octadecenoyl)-sn-glycero-3-phosphate + N-hexadecanoylethanolamine + H(+). The catalysed reaction is N,1-diacyl-sn-glycero-3-phosphoethanolamine + H2O = an N-acylethanolamine + a 1-acyl-sn-glycero-3-phosphate + H(+). It catalyses the reaction N,1-dihexadecanoyl-sn-glycero-3-phosphoethanolamine + H2O = N-hexadecanoylethanolamine + 1-hexadecanoyl-sn-glycero-3-phosphate + H(+). It carries out the reaction N-(5Z,8Z,11Z,14Z-eicosatetraenoyl)-1-(9Z-octadecenoyl)-sn-glycero-3-phosphoethanolamine + H2O = N-(5Z,8Z,11Z,14Z-eicosatetraenoyl)-ethanolamine + 1-(9Z-octadecenoyl)-sn-glycero-3-phosphate + H(+). With respect to regulation, activated by divalent cations. Activated by bile acids and their conjugates, except for lithocholic acid which is rather inhibitory. Binding of deoxycholic acid favors the selective release of anandamide and likely other unsatured long FAEs. Inhibited by phosphatidylethanolamines. Functionally, D-type phospholipase that hydrolyzes N-acyl-phosphatidylethanolamines (NAPEs) to produce bioactive N-acylethanolamines/fatty acid ethanolamides (NAEs/FAEs) and phosphatidic acid. Cleaves the terminal phosphodiester bond of diacyl- and alkenylacyl-NAPEs, primarily playing a role in the generation of long-chain saturated and monounsaturated NAEs in the brain. May control NAPE homeostasis in dopaminergic neuron membranes and regulate neuron survival, partly through RAC1 activation. As a regulator of lipid metabolism in the adipose tissue, mediates the crosstalk between adipocytes, gut microbiota and immune cells to control body temperature and weight. In particular, regulates energy homeostasis by promoting cold-induced brown or beige adipocyte differentiation program to generate heat from fatty acids and glucose. Has limited D-type phospholipase activity toward N-acyl lyso-NAPEs. In Homo sapiens (Human), this protein is N-acyl-phosphatidylethanolamine-hydrolyzing phospholipase D (NAPEPLD).